The chain runs to 280 residues: Virginiamycin B lyase (280 aa).

Histidine 215 contributes to the substrate binding site. Glutamate 254 serves as a coordination point for Mg(2+). The active-site Proton acceptor is histidine 256. Residue glutamate 271 participates in Mg(2+) binding.

Belongs to the Vgb family. As to quaternary structure, monomer. The cofactor is Mg(2+).

Functionally, inactivates the type B streptogramin antibiotics by linearizing the lactone ring at the ester linkage, generating a free phenylglycine carboxylate and converting the threonyl moiety into 2-amino-butenoic acid. This chain is Virginiamycin B lyase, found in Mycobacterium sp. (strain KMS).